We begin with the raw amino-acid sequence, 524 residues long: Glucose-6-phosphate 1-dehydrogenase (524 aa).

A Phosphoserine modification is found at S20. NADP(+) contacts are provided by residues 42–49 (GASGDLAK), R76, and K175. Residues K175, 205 to 209 (HYLGK), E243, and D262 each bind D-glucose 6-phosphate. H267 functions as the Proton acceptor in the catalytic mechanism. Residue R362 participates in NADP(+) binding. D-glucose 6-phosphate contacts are provided by K365 and R370. K371, R375, and R398 together coordinate NADP(+). Q400 contacts D-glucose 6-phosphate. NADP(+)-binding positions include 406–408 (YFK), 426–428 (DLT), R492, Y508, and W514.

The protein belongs to the glucose-6-phosphate dehydrogenase family.

It is found in the cytoplasm. The protein resides in the cytosol. It carries out the reaction D-glucose 6-phosphate + NADP(+) = 6-phospho-D-glucono-1,5-lactone + NADPH + H(+). The protein operates within carbohydrate degradation; pentose phosphate pathway; D-ribulose 5-phosphate from D-glucose 6-phosphate (oxidative stage): step 1/3. In terms of biological role, cytosolic glucose-6-phosphate dehydrogenase that catalyzes the first and rate-limiting step of the oxidative branch within the pentose phosphate pathway/shunt, an alternative route to glycolysis for the dissimilation of carbohydrates and a major source of reducing power and metabolic intermediates for fatty acid and nucleic acid biosynthetic processes. The polypeptide is Glucose-6-phosphate 1-dehydrogenase (Drosophila melanogaster (Fruit fly)).